A 33-amino-acid chain; its full sequence is Dermaseptin-H6 (33 aa).

The residue at position 33 (L33) is a Leucine amide.

Expressed by the skin glands.

It localises to the secreted. Functionally, has antimicrobial activity. This is Dermaseptin-H6 from Pithecopus hypochondrialis (Orange-legged leaf frog).